A 253-amino-acid chain; its full sequence is UPF0280 protein Mbar_A3697 (253 aa).

It belongs to the UPF0280 family.

The polypeptide is UPF0280 protein Mbar_A3697 (Methanosarcina barkeri (strain Fusaro / DSM 804)).